The chain runs to 2185 residues: Genome polyprotein (2185 aa).

A lipid anchor (N-myristoyl glycine; by host) is attached at G2. The Cytoplasmic segment spans residues 2-1495; that stretch reads GAQVSTQKTG…HVSRAFICLQ (1494 aa). The amphipathic alpha-helix stretch occupies residues 568–584; that stretch reads FFQGPVEDAITAAIGRV. Active-site for protease 2A activity residues include H872 and D890. C907 and C909 together coordinate Zn(2+). Catalysis depends on C961, which acts as the For protease 2A activity. Positions 967 and 969 each coordinate Zn(2+). Residues 1101–1173 are membrane-binding; it reads NNSWLKKFTE…EQSAPSQSDQ (73 aa). An oligomerization region spans residues 1101-1239; that stretch reads NNSWLKKFTE…SPGAGKSVAT (139 aa). Residues 1122–1126 form an RNA-binding region; the sequence is AVKIQ. Residues 1205–1361 form the SF3 helicase domain; it reads EKKMSNYIQF…SMYSQNGKIN (157 aa). Positions 1369, 1381, and 1386 each coordinate Zn(2+). A C4-type; degenerate zinc finger spans residues 1369 to 1386; sequence CDDECCPVNFKKCCPLVC. An RNA-binding region spans residues 1413 to 1420; sequence EYNHRHSV. The tract at residues 1424 to 1429 is oligomerization; the sequence is LEALFQ. Residues 1496–1511 lie within the membrane without spanning it; it reads ALTTFVSVAGIIYIIY. The Cytoplasmic segment spans residues 1512 to 2185; it reads KLFAGFQGAY…TLRRKWLDSF (674 aa). Position 1521 is an O-(5'-phospho-RNA)-tyrosine (Y1521). The Peptidase C3 domain occupies 1541-1719; it reads GPAFEFAVAM…FSAALLKHYF (179 aa). Residues H1580, E1611, and C1687 each act as for protease 3C activity in the active site. The region spanning 1950–2066 is the RdRp catalytic domain; the sequence is GHLIAFDYSG…SYPWPIDASL (117 aa). 2 residues coordinate Mg(2+): D1956 and D2052.

Belongs to the picornaviruses polyprotein family. In terms of assembly, interacts with capsid protein VP1 and capsid protein VP3 to form heterotrimeric protomers. As to quaternary structure, interacts with capsid protein VP0, and capsid protein VP3 to form heterotrimeric protomers. Five protomers subsequently associate to form pentamers which serve as building blocks for the capsid. Interacts with capsid protein VP2, capsid protein VP3 and capsid protein VP4 following cleavage of capsid protein VP0. Interacts with host CD55. Interacts with host CXADR. Interacts with capsid protein VP1 and capsid protein VP3 in the mature capsid. In terms of assembly, interacts with capsid protein VP0 and capsid protein VP1 to form heterotrimeric protomers. Five protomers subsequently associate to form pentamers which serve as building blocks for the capsid. Interacts with capsid protein VP4 in the mature capsid. Interacts with protein 2C; this interaction may be important for virion morphogenesis. As to quaternary structure, interacts with capsid protein VP1 and capsid protein VP3. Homodimer. In terms of assembly, homohexamer; forms a hexameric ring structure with 6-fold symmetry characteristic of AAA+ ATPases. Interacts (via N-terminus) with host RTN3 (via reticulon domain); this interaction is important for viral replication. Interacts with capsid protein VP3; this interaction may be important for virion morphogenesis. As to quaternary structure, interacts with protein 3CD. Homodimer. Interacts with host GBF1. Interacts (via GOLD domain) with host ACBD3 (via GOLD domain); this interaction allows the formation of a viral protein 3A/ACBD3 heterotetramer with a 2:2 stoichiometry, which will stimulate the recruitment of host PI4KB in order to synthesize PI4P at the viral RNA replication sites. In terms of assembly, interacts with RNA-directed RNA polymerase. As to quaternary structure, interacts with host TICAM1 (via C-terminus). Interacts with protein 3AB and with RNA-directed RNA polymerase. In terms of assembly, interacts with Viral protein genome-linked and with protein 3CD. It depends on Mg(2+) as a cofactor. Post-translationally, specific enzymatic cleavages in vivo by the viral proteases yield processing intermediates and the mature proteins. Myristoylation is required for the formation of pentamers during virus assembly. Further assembly of 12 pentamers and a molecule of genomic RNA generates the provirion. In terms of processing, during virion maturation, immature virions are rendered infectious following cleavage of VP0 into VP4 and VP2. This maturation seems to be an autocatalytic event triggered by the presence of RNA in the capsid and it is followed by a conformational change infectious virion. Post-translationally, myristoylation is required during RNA encapsidation and formation of the mature virus particle. VPg is uridylylated by the polymerase into VPg-pUpU. This acts as a nucleotide-peptide primer for the genomic RNA replication.

It localises to the virion. The protein localises to the host cytoplasm. Its subcellular location is the host cytoplasmic vesicle membrane. It is found in the host nucleus. The catalysed reaction is a ribonucleoside 5'-triphosphate + H2O = a ribonucleoside 5'-diphosphate + phosphate + H(+). The enzyme catalyses Selective cleavage of Tyr-|-Gly bond in the picornavirus polyprotein.. It catalyses the reaction RNA(n) + a ribonucleoside 5'-triphosphate = RNA(n+1) + diphosphate. It carries out the reaction Selective cleavage of Gln-|-Gly bond in the poliovirus polyprotein. In other picornavirus reactions Glu may be substituted for Gln, and Ser or Thr for Gly.. Its activity is regulated as follows. Replication or transcription is subject to high level of random mutations by the nucleotide analog ribavirin. Functionally, forms an icosahedral capsid of pseudo T=3 symmetry with capsid proteins VP2 and VP3. The capsid is 300 Angstroms in diameter, composed of 60 copies of each capsid protein and enclosing the viral positive strand RNA genome. Capsid protein VP1 mainly forms the vertices of the capsid. Capsid protein VP1 interacts with host CD55 and CXADR to provide virion attachment to target host cells. This attachment induces virion internalization. Tyrosine kinases are probably involved in the entry process. After binding to its receptor, the capsid undergoes conformational changes. Capsid protein VP1 N-terminus (that contains an amphipathic alpha-helix) and capsid protein VP4 are externalized. Together, they shape a pore in the host membrane through which viral genome is translocated to host cell cytoplasm. Forms an icosahedral capsid of pseudo T=3 symmetry with capsid proteins VP2 and VP3. The capsid is 300 Angstroms in diameter, composed of 60 copies of each capsid protein and enclosing the viral positive strand RNA genome. Its function is as follows. Lies on the inner surface of the capsid shell. After binding to the host receptor, the capsid undergoes conformational changes. Capsid protein VP4 is released, Capsid protein VP1 N-terminus is externalized, and together, they shape a pore in the host membrane through which the viral genome is translocated into the host cell cytoplasm. In terms of biological role, component of immature procapsids, which is cleaved into capsid proteins VP4 and VP2 after maturation. Allows the capsid to remain inactive before the maturation step. Functionally, cysteine protease that cleaves viral polyprotein and specific host proteins. It is responsible for the autocatalytic cleavage between the P1 and P2 regions, which is the first cleavage occurring in the polyprotein. Also cleaves the host translation initiation factor EIF4G1, in order to shut down the capped cellular mRNA translation. Inhibits the host nucleus-cytoplasm protein and RNA trafficking by cleaving host members of the nuclear pores. Counteracts stress granule formation probably by antagonizing its assembly or promoting its dissassembly. Cleaves and inhibits host IFIH1/MDA5, thereby inhibiting the type-I IFN production and the establishment of the antiviral state. Cleaves and inhibits host MAVS, thereby inhibiting the type-I IFN production and the establishment of the antiviral state. Plays an essential role in the virus replication cycle by acting as a viroporin. Creates a pore in the host endoplasmic reticulum and as a consequence releases Ca2+ in the cytoplasm of infected cell. In turn, high levels of cytoplasmic calcium may trigger membrane trafficking and transport of viral ER-associated proteins to viroplasms, sites of viral genome replication. Its function is as follows. Induces and associates with structural rearrangements of intracellular membranes. Displays RNA-binding, nucleotide binding and NTPase activities. May play a role in virion morphogenesis and viral RNA encapsidation by interacting with the capsid protein VP3. In terms of biological role, localizes the viral replication complex to the surface of membranous vesicles. Together with protein 3CD binds the Cis-Active RNA Element (CRE) which is involved in RNA synthesis initiation. Acts as a cofactor to stimulate the activity of 3D polymerase, maybe through a nucleid acid chaperone activity. Functionally, localizes the viral replication complex to the surface of membranous vesicles. It inhibits host cell endoplasmic reticulum-to-Golgi apparatus transport and causes the disassembly of the Golgi complex, possibly through GBF1 interaction. This would result in depletion of MHC, trail receptors and IFN receptors at the host cell surface. Plays an essential role in viral RNA replication by recruiting ACBD3 and PI4KB at the viral replication sites, thereby allowing the formation of the rearranged membranous structures where viral replication takes place. Acts as a primer for viral RNA replication and remains covalently bound to viral genomic RNA. VPg is uridylylated prior to priming replication into VPg-pUpU. The oriI viral genomic sequence may act as a template for this. The VPg-pUpU is then used as primer on the genomic RNA poly(A) by the RNA-dependent RNA polymerase to replicate the viral genome. During genome replication, the VPg-RNA linkage is removed by the host TDP2, thereby accelerating replication. During the late stage of the replication cycle, host TDP2 is excluded from sites of viral RNA synthesis and encapsidation, allowing for the generation of progeny virions. Its function is as follows. Involved in the viral replication complex and viral polypeptide maturation. It exhibits protease activity with a specificity and catalytic efficiency that is different from protease 3C. Protein 3CD lacks polymerase activity. Protein 3CD binds to the 5'UTR of the viral genome. In terms of biological role, major viral protease that mediates proteolytic processing of the polyprotein. Cleaves host EIF5B, contributing to host translation shutoff. Cleaves also host PABPC1, contributing to host translation shutoff. Cleaves and inhibits host RIGI, thereby inhibiting the type-I IFN production and the establishment of the antiviral state. Cleaves and inhibits host MAVS, thereby inhibiting the type-I IFN production and the establishment of the antiviral state. Cleaves and inhibits host TICAM1/TRIF, thereby inhibiting the type-I IFN production. Cleaves host NLRP1, triggers host N-glycine-mediated degradation of the autoinhibitory NLRP1 N-terminal fragment. Cleaves host transcription factor TFEB, thereby disrupting host lysosomal functions and enhancing viral infection. Functionally, replicates the viral genomic RNA on the surface of intracellular membranes. May form linear arrays of subunits that propagate along a strong head-to-tail interaction called interface-I. Covalently attaches UMP to a tyrosine of VPg, which is used to prime RNA synthesis. The positive stranded RNA genome is first replicated at virus induced membranous vesicles, creating a dsRNA genomic replication form. This dsRNA is then used as template to synthesize positive stranded RNA genomes. ss(+)RNA genomes are either translated, replicated or encapsidated. The sequence is that of Genome polyprotein from Coxsackievirus B3 (strain Nancy).